Here is a 301-residue protein sequence, read N- to C-terminus: Probable alpha-L-glutamate ligase 1 (301 aa).

One can recognise an ATP-grasp domain in the interval 104–287 (MQLMSRRGIG…VAGAIIAFIE (184 aa)). ATP is bound by residues Lys141, 178–179 (EY), Asp187, and 211–213 (RSN). Residues Asp248, Glu260, and Asn262 each contribute to the Mg(2+) site. Positions 248, 260, and 262 each coordinate Mn(2+).

It belongs to the RimK family. The cofactor is Mg(2+). Mn(2+) is required as a cofactor.

The protein is Probable alpha-L-glutamate ligase 1 of Shewanella amazonensis (strain ATCC BAA-1098 / SB2B).